Reading from the N-terminus, the 576-residue chain is Arginine--tRNA ligase (576 aa).

The 'HIGH' region signature appears at 122 to 132 (PNVAKQMHVGH).

The protein belongs to the class-I aminoacyl-tRNA synthetase family. As to quaternary structure, monomer.

The protein localises to the cytoplasm. The catalysed reaction is tRNA(Arg) + L-arginine + ATP = L-arginyl-tRNA(Arg) + AMP + diphosphate. The polypeptide is Arginine--tRNA ligase (Proteus mirabilis (strain HI4320)).